Here is a 106-residue protein sequence, read N- to C-terminus: Large ribosomal subunit protein eL42 (106 aa).

The protein belongs to the eukaryotic ribosomal protein eL42 family.

It is found in the cytoplasm. This Trypanosoma brucei brucei protein is Large ribosomal subunit protein eL42 (RPL44).